Reading from the N-terminus, the 27-residue chain is Putative phosphoglycerate kinase (27 aa).

This sequence belongs to the phosphoglycerate kinase family. Monomer. Requires Mg(2+) as cofactor.

It carries out the reaction (2R)-3-phosphoglycerate + ATP = (2R)-3-phospho-glyceroyl phosphate + ADP. The chain is Putative phosphoglycerate kinase from Pinus strobus (Eastern white pine).